A 623-amino-acid chain; its full sequence is Glutathione import ATP-binding protein GsiA (623 aa).

2 consecutive ABC transporter domains span residues 15-269 (VENL…RALL) and 314-564 (LRVR…RKLL). ATP is bound by residues 49-56 (GESGSGKS) and 357-364 (GESGSGKS).

It belongs to the ABC transporter superfamily. Glutathione importer (TC 3.A.1.5.11) family. As to quaternary structure, the complex is composed of two ATP-binding proteins (GsiA), two transmembrane proteins (GsiC and GsiD) and a solute-binding protein (GsiB).

It is found in the cell inner membrane. The enzyme catalyses glutathione(out) + ATP + H2O = glutathione(in) + ADP + phosphate + H(+). Functionally, part of the ABC transporter complex GsiABCD involved in glutathione import. Responsible for energy coupling to the transport system. This Shigella dysenteriae serotype 1 (strain Sd197) protein is Glutathione import ATP-binding protein GsiA.